The chain runs to 899 residues: DNA mismatch repair protein MutS (899 aa).

The segment at 1 to 20 (MGLQKKTDPEQAQADSAASR) is disordered. 631-638 (GPNMGGKS) is an ATP binding site. The segment at 832-852 (PPTPDDDEDDFGAAPSAVPAP) is disordered. A compositionally biased stretch (low complexity) spans 843-852 (GAAPSAVPAP).

The protein belongs to the DNA mismatch repair MutS family.

Functionally, this protein is involved in the repair of mismatches in DNA. It is possible that it carries out the mismatch recognition step. This protein has a weak ATPase activity. This chain is DNA mismatch repair protein MutS, found in Cupriavidus necator (strain ATCC 17699 / DSM 428 / KCTC 22496 / NCIMB 10442 / H16 / Stanier 337) (Ralstonia eutropha).